Consider the following 533-residue polypeptide: Tyrosine/DOPA decarboxylase 3 (533 aa).

K319 is modified (N6-(pyridoxal phosphate)lysine).

The protein belongs to the group II decarboxylase family. As to quaternary structure, homodimer. Pyridoxal 5'-phosphate is required as a cofactor. In terms of tissue distribution, roots.

The enzyme catalyses L-tyrosine + H(+) = tyramine + CO2. The catalysed reaction is L-dopa + H(+) = dopamine + CO2. It catalyses the reaction 5-hydroxy-L-tryptophan + H(+) = serotonin + CO2. Marginally higher substrate specificity for L-DOPA over L-tyrosine. The protein is Tyrosine/DOPA decarboxylase 3 (TYDC3) of Papaver somniferum (Opium poppy).